We begin with the raw amino-acid sequence, 192 residues long: Fumarylpyruvate hydrolase (192 aa).

Positions 41, 43, and 72 each coordinate a divalent metal cation.

This sequence belongs to the FAH family. It depends on Mg(2+) as a cofactor. Mn(2+) serves as cofactor.

It carries out the reaction 3-fumarylpyruvate + H2O = fumarate + pyruvate + H(+). It participates in aromatic compound metabolism; naphthalene degradation. Its function is as follows. Involved in the catabolism of gentisate (2,5-dihydroxybenzoate) a key intermediates in the aerobic pathways for the metabolism of a large number of aromatic compoun such as naphthalene. Catalyzes the hydrolytic cleavage of fumarylpyruvate to form fumarate and pyruvate. This is Fumarylpyruvate hydrolase from Ralstonia sp.